The primary structure comprises 368 residues: Chaperone protein DnaJ (368 aa).

Positions 5–70 (DYYQVLGVPR…KKRKLYDTHG (66 aa)) constitute a J domain. The CR-type zinc finger occupies 124-201 (GVERQIQIPT…CNGAGRVEDH (78 aa)). Zn(2+)-binding residues include cysteine 137, cysteine 140, cysteine 153, cysteine 156, cysteine 175, cysteine 178, cysteine 189, and cysteine 192. CXXCXGXG motif repeat units follow at residues 137–144 (CTHCHGSG), 153–160 (CGTCRGSG), 175–182 (CPHCGGRG), and 189–196 (CKVCNGAG).

The protein belongs to the DnaJ family. Homodimer. Zn(2+) serves as cofactor.

It localises to the cytoplasm. Its function is as follows. Participates actively in the response to hyperosmotic and heat shock by preventing the aggregation of stress-denatured proteins and by disaggregating proteins, also in an autonomous, DnaK-independent fashion. Unfolded proteins bind initially to DnaJ; upon interaction with the DnaJ-bound protein, DnaK hydrolyzes its bound ATP, resulting in the formation of a stable complex. GrpE releases ADP from DnaK; ATP binding to DnaK triggers the release of the substrate protein, thus completing the reaction cycle. Several rounds of ATP-dependent interactions between DnaJ, DnaK and GrpE are required for fully efficient folding. Also involved, together with DnaK and GrpE, in the DNA replication of plasmids through activation of initiation proteins. This chain is Chaperone protein DnaJ, found in Xylella fastidiosa (strain 9a5c).